The chain runs to 279 residues: Pantothenate synthetase (279 aa).

Residue 26–33 coordinates ATP; it reads MGALHSGH. The active-site Proton donor is histidine 33. Glutamine 57 serves as a coordination point for (R)-pantoate. Residue glutamine 57 coordinates beta-alanine. Position 147–150 (147–150) interacts with ATP; the sequence is GQKD. Position 153 (glutamine 153) interacts with (R)-pantoate. Residues isoleucine 176 and 184-187 contribute to the ATP site; that span reads ESSR.

Belongs to the pantothenate synthetase family. As to quaternary structure, homodimer.

The protein resides in the cytoplasm. The catalysed reaction is (R)-pantoate + beta-alanine + ATP = (R)-pantothenate + AMP + diphosphate + H(+). It participates in cofactor biosynthesis; (R)-pantothenate biosynthesis; (R)-pantothenate from (R)-pantoate and beta-alanine: step 1/1. Functionally, catalyzes the condensation of pantoate with beta-alanine in an ATP-dependent reaction via a pantoyl-adenylate intermediate. This is Pantothenate synthetase from Corynebacterium glutamicum (strain R).